Reading from the N-terminus, the 519-residue chain is Trichothecene 15-O-acetyltransferase TRI3 (519 aa).

Histidine 414 serves as a coordination point for 15-deacetylcalonectrin.

This sequence belongs to the trichothecene O-acetyltransferase family.

The protein operates within sesquiterpene biosynthesis; trichothecene biosynthesis. Its function is as follows. 15-O-acetyltransferase; part of the core gene cluster that mediates the biosynthesis of trichothecenes, a very large family of chemically related bicyclic sesquiterpene compounds acting as mycotoxins, including T2-toxin. The biosynthesis of trichothecenes begins with the cyclization of farnesyl diphosphate to trichodiene and is catalyzed by the trichodiene synthase TRI5. Trichodiene undergoes a series of oxygenations catalyzed by the cytochrome P450 monooxygenase TRI4. TRI4 controls the addition of four oxygens at C-2, C-3, C-11, and the C-12, C-13-epoxide to form the intermediate isotrichotriol. Isotrichotriol then undergoes a non-enzymatic isomerization and cyclization to form isotrichodermol. During this process, the oxygen at the C-2 position becomes the pyran ring oxygen and the hydroxyl group at C-11 is lost. More complex type A trichothecenes are built by modifying isotrichodermol through a series of paired hydroxylation and acetylation or acylation steps. Isotrichodermol is converted to isotrichodermin by the acetyltransferase TRI101. TRI101 encodes a C-3 transacetylase that acts as a self-protection or resistance factor during biosynthesis and that the presence of a free C-3 hydroxyl group is a key component of Fusarium trichothecene phytotoxicity. A second hydroxyl group is added to C-15 by the trichothecene C-15 hydroxylase TRI11, producing 15-decalonectrin, which is then acetylated by TRI3, producing calonectrin. A third hydroxyl group is added at C-4 by the cytochrome P450 monooxygenase TRI13, converting calonectrin to 3,15-diacetoxyspirpenol, which is subsequently acetylated by the acetyltransferase TRI7. A fourth hydroxyl group is added to C-8 by the cytochrome P450 monooxygenase TRI1, followed by the addition of an isovaleryl moiety by TRI16. Finally, the acetyl group is removed from the C-3 position by the trichothecene C-3 esterase TRI8 to produce T-2 toxin. This chain is Trichothecene 15-O-acetyltransferase TRI3, found in Fusarium sporotrichioides.